The primary structure comprises 197 residues: Peptidyl-tRNA hydrolase (197 aa).

Tyrosine 21 serves as a coordination point for tRNA. Histidine 26 functions as the Proton acceptor in the catalytic mechanism. Positions 72, 74, and 120 each coordinate tRNA.

Belongs to the PTH family. Monomer.

Its subcellular location is the cytoplasm. It carries out the reaction an N-acyl-L-alpha-aminoacyl-tRNA + H2O = an N-acyl-L-amino acid + a tRNA + H(+). Hydrolyzes ribosome-free peptidyl-tRNAs (with 1 or more amino acids incorporated), which drop off the ribosome during protein synthesis, or as a result of ribosome stalling. In terms of biological role, catalyzes the release of premature peptidyl moieties from peptidyl-tRNA molecules trapped in stalled 50S ribosomal subunits, and thus maintains levels of free tRNAs and 50S ribosomes. This chain is Peptidyl-tRNA hydrolase, found in Saccharophagus degradans (strain 2-40 / ATCC 43961 / DSM 17024).